A 714-amino-acid polypeptide reads, in one-letter code: Fatty acid oxidation complex subunit alpha (714 aa).

The enoyl-CoA hydratase stretch occupies residues 1 to 190 (MEMASAFTLN…KLGLVDDVVP (190 aa)). The tract at residues 306-714 (APLNSVGILG…FWKTTATDLQ (409 aa)) is 3-hydroxyacyl-CoA dehydrogenase.

This sequence in the N-terminal section; belongs to the enoyl-CoA hydratase/isomerase family. It in the central section; belongs to the 3-hydroxyacyl-CoA dehydrogenase family. As to quaternary structure, heterotetramer of two alpha chains (FadJ) and two beta chains (FadI).

The protein resides in the cytoplasm. It catalyses the reaction a (3S)-3-hydroxyacyl-CoA = a (2E)-enoyl-CoA + H2O. It carries out the reaction a 4-saturated-(3S)-3-hydroxyacyl-CoA = a (3E)-enoyl-CoA + H2O. The enzyme catalyses a (3S)-3-hydroxyacyl-CoA + NAD(+) = a 3-oxoacyl-CoA + NADH + H(+). The catalysed reaction is (3S)-3-hydroxybutanoyl-CoA = (3R)-3-hydroxybutanoyl-CoA. It functions in the pathway lipid metabolism; fatty acid beta-oxidation. Catalyzes the formation of a hydroxyacyl-CoA by addition of water on enoyl-CoA. Also exhibits 3-hydroxyacyl-CoA epimerase and 3-hydroxyacyl-CoA dehydrogenase activities. The polypeptide is Fatty acid oxidation complex subunit alpha (Shigella boydii serotype 18 (strain CDC 3083-94 / BS512)).